The sequence spans 409 residues: D-galactonate dehydratase family member Achl_0790 (409 aa).

D217 provides a ligand contact to Mg(2+). H219 is a binding site for D-arabinonate. E243 and E269 together coordinate Mg(2+). The D-arabinonate site is built by E269, R290, H319, and E346.

The protein belongs to the mandelate racemase/muconate lactonizing enzyme family. GalD subfamily.

Its function is as follows. Has no detectable activity with D-mannonate and with a panel of 70 other acid sugars (in vitro), in spite of the conservation of the residues that are expected to be important for catalytic activity and cofactor binding. May have evolved a divergent function. The polypeptide is D-galactonate dehydratase family member Achl_0790 (Pseudarthrobacter chlorophenolicus (strain ATCC 700700 / DSM 12829 / CIP 107037 / JCM 12360 / KCTC 9906 / NCIMB 13794 / A6) (Arthrobacter chlorophenolicus)).